The primary structure comprises 442 residues: Probable xylan O-acetyltransferase 8 (442 aa).

The Cytoplasmic segment spans residues M1–R13. The chain crosses the membrane as a helical; Signal-anchor for type II membrane protein span at residues A14–T34. Over E35 to L442 the chain is Lumenal. An N-linked (GlcNAc...) asparagine glycan is attached at N96. Cystine bridges form between C100/C151, C122/C187, C131/C426, and C344/C422. A GDS motif motif is present at residues G174–S176. Residue S176 is the Nucleophile of the active site. 3 N-linked (GlcNAc...) asparagine glycosylation sites follow: N217, N346, and N384. D421 serves as the catalytic Proton donor. The short motif at D421–H424 is the DXXH motif element. Catalysis depends on H424, which acts as the Proton acceptor.

This sequence belongs to the PC-esterase family. TBL subfamily.

The protein resides in the golgi apparatus membrane. Probable xylan acetyltransferase required for 2-O- and 3-O-monoacetylation of xylosyl residues in xylan. Possesses extremely low activity in vitro. This Oryza sativa subsp. japonica (Rice) protein is Probable xylan O-acetyltransferase 8.